A 395-amino-acid polypeptide reads, in one-letter code: SWI/SNF and RSC complexes subunit ssr4 (395 aa).

Residues 182 to 230 (KKHIPEGTALSQRETLPNMGSAQMKSQSRTPSFSNVTTSPVPPINSNAT) are disordered. A compositionally biased stretch (polar residues) spans 190–230 (ALSQRETLPNMGSAQMKSQSRTPSFSNVTTSPVPPINSNAT).

This sequence belongs to the SSR4 family. As to quaternary structure, component of the RSC complex composed of at least arp9, arp42, rsc1, rsc4, rsc7, rsc9, rsc58, sfh1, snf21, ssr1, ssr2, ssr3 and ssr4. The complex interacts with histone and histone variant components of centromeric chromatin. Component of the SWI/SNF global transcription activator complex composed of at least arp9, arp42, snf5, snf22, snf30, sbf59, sol1, ssr1, ssr2, ssr3, ssr4 and tfg3.

The protein resides in the cytoplasm. It is found in the nucleus. Its function is as follows. Component of the chromatin structure remodeling complex (RSC), which is involved in transcription regulation and nucleosome positioning. Controls particularly membrane and organelle development genes. Part of the SWI/SNF complex, an ATP-dependent chromatin remodeling complex, required for the positive and negative regulation of gene expression of a large number of genes. It changes chromatin structure by altering DNA-histone contacts within a nucleosome, leading eventually to a change in nucleosome position, thus facilitating or repressing binding of gene-specific transcription factors. The sequence is that of SWI/SNF and RSC complexes subunit ssr4 (ssr4) from Schizosaccharomyces pombe (strain 972 / ATCC 24843) (Fission yeast).